The chain runs to 364 residues: DNA replication and repair protein RecF (364 aa).

30 to 37 (GDNGAGKT) contacts ATP.

It belongs to the RecF family.

It localises to the cytoplasm. In terms of biological role, the RecF protein is involved in DNA metabolism; it is required for DNA replication and normal SOS inducibility. RecF binds preferentially to single-stranded, linear DNA. It also seems to bind ATP. This is DNA replication and repair protein RecF from Stenotrophomonas maltophilia (strain K279a).